Here is a 76-residue protein sequence, read N- to C-terminus: Proteolipid protein 2 (76 aa).

One can recognise an MARVEL domain in the interval 1 to 60 (ISGPWSDFFRALGAVILYLMTSIVVLVERGNNSKGAAGVLGLCAAGLFGYDAYITFPSGT). A helical membrane pass occupies residues 8-28 (FFRALGAVILYLMTSIVVLVE). The N-linked (GlcNAc...) asparagine glycan is linked to asparagine 31. A helical transmembrane segment spans residues 36 to 56 (AAGVLGLCAAGLFGYDAYITF).

The protein localises to the membrane. May play a role in cell differentiation in the intestinal epithelium. This Ovis aries (Sheep) protein is Proteolipid protein 2 (PLP2).